The chain runs to 62 residues: Photosystem II reaction center protein Z (62 aa).

The next 2 helical transmembrane spans lie at 8 to 28 (AVFALIATSFLLVIGVPVVLA) and 41 to 61 (FSGASLWIGLVFLVGILNSFI).

It belongs to the PsbZ family. As to quaternary structure, PSII is composed of 1 copy each of membrane proteins PsbA, PsbB, PsbC, PsbD, PsbE, PsbF, PsbH, PsbI, PsbJ, PsbK, PsbL, PsbM, PsbT, PsbY, PsbZ, Psb30/Ycf12, at least 3 peripheral proteins of the oxygen-evolving complex and a large number of cofactors. It forms dimeric complexes.

Its subcellular location is the plastid. The protein localises to the chloroplast thylakoid membrane. Its function is as follows. May control the interaction of photosystem II (PSII) cores with the light-harvesting antenna, regulates electron flow through the 2 photosystem reaction centers. PSII is a light-driven water plastoquinone oxidoreductase, using light energy to abstract electrons from H(2)O, generating a proton gradient subsequently used for ATP formation. In Anthoceros angustus (Hornwort), this protein is Photosystem II reaction center protein Z.